The primary structure comprises 188 residues: Cytochrome b-245 chaperone 1 homolog (188 aa).

A helical membrane pass occupies residues 20 to 42; the sequence is SIRSWSLLVGISSVGLAAAYYST.

The protein belongs to the CYBC1 family.

It localises to the endoplasmic reticulum membrane. In terms of biological role, functions as a chaperone necessary for a stable expression of the CYBA and CYBB subunits of the cytochrome b-245 heterodimer. The protein is Cytochrome b-245 chaperone 1 homolog (cybc1) of Xenopus tropicalis (Western clawed frog).